The sequence spans 184 residues: ATP synthase subunit b, chloroplastic (184 aa).

A helical membrane pass occupies residues 27 to 49; it reads LATNLINLSVVLGVLIFFGKGVL.

Belongs to the ATPase B chain family. F-type ATPases have 2 components, F(1) - the catalytic core - and F(0) - the membrane proton channel. F(1) has five subunits: alpha(3), beta(3), gamma(1), delta(1), epsilon(1). F(0) has four main subunits: a(1), b(1), b'(1) and c(10-14). The alpha and beta chains form an alternating ring which encloses part of the gamma chain. F(1) is attached to F(0) by a central stalk formed by the gamma and epsilon chains, while a peripheral stalk is formed by the delta, b and b' chains.

The protein resides in the plastid. The protein localises to the chloroplast thylakoid membrane. F(1)F(0) ATP synthase produces ATP from ADP in the presence of a proton or sodium gradient. F-type ATPases consist of two structural domains, F(1) containing the extramembraneous catalytic core and F(0) containing the membrane proton channel, linked together by a central stalk and a peripheral stalk. During catalysis, ATP synthesis in the catalytic domain of F(1) is coupled via a rotary mechanism of the central stalk subunits to proton translocation. Its function is as follows. Component of the F(0) channel, it forms part of the peripheral stalk, linking F(1) to F(0). This Helianthus annuus (Common sunflower) protein is ATP synthase subunit b, chloroplastic.